We begin with the raw amino-acid sequence, 375 residues long: MQKLQISVYIYLFVLILAGPVDLNENSEQKENVEKEGLCNACTWRQNTKSSRIEAIKIQILSKLRLETAPNISKDAIRQLLPKAPPLRELIDQYDVQRDDSSDGSLEDDDYHATTETIITMPTESDLLMQVEGKPKCCFFKFSSKIQYNKVVKAQLWIYLRPVKTPTTVFVQILRLIKPMKDGTRYTGIRSLKLDMNPGAGIWQSIDVKTVLQNWLKQPESNLGIEIKALDENGHDLAVTFPRPGEDGLNPFLEVKVTDTPKRSRRDFGLDCDEHSTESRCCRYPLTVDFEAFGWDWIIAPKRYKANYCSGECEFVFLQKYPHTHLVHQANPRGSAGPCCTPTKMSPINMLYFNGKEQIIYGKIPAMVVDRCGCS.

The N-terminal stretch at 1-18 is a signal peptide; sequence MQKLQISVYIYLFVLILA. Positions 19–266 are excised as a propeptide; that stretch reads GPVDLNENSE…VTDTPKRSRR (248 aa). Residue asparagine 71 is glycosylated (N-linked (GlcNAc...) asparagine). Cystine bridges form between cysteine 272–cysteine 282, cysteine 281–cysteine 340, cysteine 309–cysteine 372, and cysteine 313–cysteine 374.

Belongs to the TGF-beta family. In terms of assembly, homodimer; disulfide-linked. Interacts with WFIKKN2, leading to inhibit its activity. Interacts with FSTL3. Post-translationally, synthesized as large precursor molecule that undergoes proteolytic cleavage to generate an N-terminal propeptide and a disulfide linked C-terminal dimer, which is the biologically active molecule. The circulating form consists of a latent complex of the C-terminal dimer and other proteins, including its propeptide, which maintain the C-terminal dimer in a latent, inactive state. Ligand activation requires additional cleavage of the prodomain by a tolloid-like metalloproteinase.

The protein localises to the secreted. Acts specifically as a negative regulator of skeletal muscle growth. This Equus caballus (Horse) protein is Growth/differentiation factor 8 (MSTN).